The sequence spans 94 residues: RNA-binding protein Hfq (94 aa).

Residues 9 to 68 (DPFLNALRRERVPVSIYLVNGIKLQGQVESFDQFVILLKNTVSQMVYKHAISTVVPARPF) enclose the Sm domain. The segment at 70-94 (VSAHHSSPAPTPAGGFNGQNDETSE) is disordered.

This sequence belongs to the Hfq family. In terms of assembly, homohexamer.

RNA chaperone that binds small regulatory RNA (sRNAs) and mRNAs to facilitate mRNA translational regulation in response to envelope stress, environmental stress and changes in metabolite concentrations. Also binds with high specificity to tRNAs. In Shewanella woodyi (strain ATCC 51908 / MS32), this protein is RNA-binding protein Hfq.